Reading from the N-terminus, the 537-residue chain is 2-succinyl-5-enolpyruvyl-6-hydroxy-3-cyclohexene-1-carboxylate synthase (537 aa).

Belongs to the TPP enzyme family. MenD subfamily. Homodimer. Mg(2+) serves as cofactor. The cofactor is Mn(2+). Requires thiamine diphosphate as cofactor.

It catalyses the reaction isochorismate + 2-oxoglutarate + H(+) = 5-enolpyruvoyl-6-hydroxy-2-succinyl-cyclohex-3-ene-1-carboxylate + CO2. Its pathway is quinol/quinone metabolism; 1,4-dihydroxy-2-naphthoate biosynthesis; 1,4-dihydroxy-2-naphthoate from chorismate: step 2/7. It functions in the pathway quinol/quinone metabolism; menaquinone biosynthesis. Its function is as follows. Catalyzes the thiamine diphosphate-dependent decarboxylation of 2-oxoglutarate and the subsequent addition of the resulting succinic semialdehyde-thiamine pyrophosphate anion to isochorismate to yield 2-succinyl-5-enolpyruvyl-6-hydroxy-3-cyclohexene-1-carboxylate (SEPHCHC). The chain is 2-succinyl-5-enolpyruvyl-6-hydroxy-3-cyclohexene-1-carboxylate synthase from Nocardioides sp. (strain ATCC BAA-499 / JS614).